A 407-amino-acid chain; its full sequence is MKKLAYLECPTGIAGDMCLGALVDLGVPIDYLNQHLKGLGIDSEYRLWAEKVHRQGQQGTKVHVDLTLDPTHSDHHHHSHHSPHRHLPTIEQLIVNATLPPKAQDWSLKVFRQLALAEGAVHGIAPEKVHFHEVGATDAIVDIVGTCLGLDWLGIDQLYCSAMPTGGGTVKAAHGCLPVPVPAVLKLWELRHVPIYNNGINKELVTPTGAAIATTLSLEFGSSPSMRVQKVGLGAGTADLPIPNLLRLWLGESTETPQKETISVLETQIDDLSPQAIGYVFEALFEVGALDVFTSAIGMKKSRPGILLTVICPPDKVSVCERVIFRETTTLGIRHLTQERSILQREIHWVQTAYGQVKVKVASQGTGENQQIFNVQPEYEDCAELARKHNIPWRIIHQLALAAWNNH.

It belongs to the LarC family.

This is Putative nickel insertion protein from Gloeothece citriformis (strain PCC 7424) (Cyanothece sp. (strain PCC 7424)).